The primary structure comprises 386 residues: F420 non-reducing hydrogenase II small subunit (386 aa).

A signal peptide (tat-type signal) is located at residues 1–51 (MVEMSTGMKNLTRTLESMDFLKMDRRTFMKAVSALGATAFLGTYQTEIVNA). Positions 67, 70, 178, 227, 273, 276, 296, and 302 each coordinate [4Fe-4S] cluster. C311, C330, and C333 together coordinate [3Fe-4S] cluster.

Belongs to the [NiFe]/[NiFeSe] hydrogenase small subunit family. Composed of a large subunit (VhtA), a small subunit (VhtG) and a cytochrome subunit (VhtC). The cofactor is [4Fe-4S] cluster. It depends on [3Fe-4S] cluster as a cofactor. Predicted to be exported by the Tat system. The position of the signal peptide cleavage has not been experimentally proven.

The protein resides in the cell membrane. The catalysed reaction is methanophenazine + H2 = dihydromethanophenazine. In terms of biological role, part of the F420 non-reducing hydrogenase II complex that catalyzes the reduction of methanophenazine to dihydromethanophenazine. The protein is F420 non-reducing hydrogenase II small subunit of Methanosarcina mazei (strain ATCC BAA-159 / DSM 3647 / Goe1 / Go1 / JCM 11833 / OCM 88) (Methanosarcina frisia).